The chain runs to 243 residues: Exosome complex component Rrp41 (243 aa).

Belongs to the RNase PH family. Rrp41 subfamily. In terms of assembly, component of the archaeal exosome complex. Forms a hexameric ring-like arrangement composed of 3 Rrp41-Rrp42 heterodimers. The hexameric ring associates with a trimer of Rrp4 and/or Csl4 subunits.

It localises to the cytoplasm. In terms of biological role, catalytic component of the exosome, which is a complex involved in RNA degradation. Has 3'-&gt;5' exoribonuclease activity. Can also synthesize heteromeric RNA-tails. In Sulfurisphaera tokodaii (strain DSM 16993 / JCM 10545 / NBRC 100140 / 7) (Sulfolobus tokodaii), this protein is Exosome complex component Rrp41.